The following is a 250-amino-acid chain: Imidazole glycerol phosphate synthase subunit HisF (250 aa).

Residues Asp-11 and Asp-130 contribute to the active site.

Belongs to the HisA/HisF family. In terms of assembly, heterodimer of HisH and HisF.

The protein localises to the cytoplasm. It carries out the reaction 5-[(5-phospho-1-deoxy-D-ribulos-1-ylimino)methylamino]-1-(5-phospho-beta-D-ribosyl)imidazole-4-carboxamide + L-glutamine = D-erythro-1-(imidazol-4-yl)glycerol 3-phosphate + 5-amino-1-(5-phospho-beta-D-ribosyl)imidazole-4-carboxamide + L-glutamate + H(+). It functions in the pathway amino-acid biosynthesis; L-histidine biosynthesis; L-histidine from 5-phospho-alpha-D-ribose 1-diphosphate: step 5/9. IGPS catalyzes the conversion of PRFAR and glutamine to IGP, AICAR and glutamate. The HisF subunit catalyzes the cyclization activity that produces IGP and AICAR from PRFAR using the ammonia provided by the HisH subunit. This chain is Imidazole glycerol phosphate synthase subunit HisF, found in Bacteroides fragilis (strain ATCC 25285 / DSM 2151 / CCUG 4856 / JCM 11019 / LMG 10263 / NCTC 9343 / Onslow / VPI 2553 / EN-2).